The primary structure comprises 125 residues: Large ribosomal subunit protein eL31 (125 aa).

It belongs to the eukaryotic ribosomal protein eL31 family. In terms of assembly, component of the large ribosomal subunit.

The protein localises to the cytoplasm. In terms of biological role, component of the large ribosomal subunit. The ribosome is a large ribonucleoprotein complex responsible for the synthesis of proteins in the cell. The chain is Large ribosomal subunit protein eL31 (rpl31) from Xenopus laevis (African clawed frog).